Consider the following 57-residue polypeptide: Small ribosomal subunit protein eS31 (57 aa).

4 residues coordinate Zn(2+): Cys29, Cys32, Cys47, and Cys50. The segment at 29–50 (CPRCGPGVFMANHKDRWSCGRC) adopts a C4-type zinc-finger fold.

The protein belongs to the eukaryotic ribosomal protein eS31 family. Part of the 30S ribosomal subunit. Requires Zn(2+) as cofactor.

The polypeptide is Small ribosomal subunit protein eS31 (Thermococcus kodakarensis (strain ATCC BAA-918 / JCM 12380 / KOD1) (Pyrococcus kodakaraensis (strain KOD1))).